A 279-amino-acid polypeptide reads, in one-letter code: Sperm acrosome membrane-associated protein 1 (279 aa).

The N-terminal stretch at 1 to 29 (MKSRGAGCSARLLLTVGWLLLAGLQSTCG) is a signal peptide. The Extracellular segment spans residues 30–221 (INVTAIQDPS…VIICIFVIFV (192 aa)). N31 is a glycosylation site (N-linked (GlcNAc...) asparagine). Residues 39–74 (SLAREGEGEPEGDEEPENDSETEKEPQAEAEDDSEG) form a disordered region. Positions 46-58 (GEPEGDEEPENDS) are enriched in acidic residues. Residues 222–242 (LIFIIINWTAVKDFWAKASTT) form a helical membrane-spanning segment. At 243 to 279 (EIQSELSSMRYKDSTSLDQSPTDIPGHEDDALSEWNE) the chain is on the cytoplasmic side. Y253 carries the post-translational modification Phosphotyrosine. Residues 253–279 (YKDSTSLDQSPTDIPGHEDDALSEWNE) are disordered. Phosphoserine is present on residues S262 and S275.

As to quaternary structure, interacts with CYLC1; the interaction may be relevant for proper acrosome attachment to the nuclear envelope. Post-translationally, N-glycosylated.

The protein localises to the cytoplasmic vesicle. It is found in the secretory vesicle. It localises to the acrosome inner membrane. Functionally, plays a role in acrosome expansion and establishment of normal sperm morphology during spermatogenesis. Important for male fertility. This chain is Sperm acrosome membrane-associated protein 1 (SPACA1), found in Bos taurus (Bovine).